Here is an 86-residue protein sequence, read N- to C-terminus: High affinity immunoglobulin epsilon receptor subunit gamma (86 aa).

The signal sequence occupies residues 1–18; sequence MIPAVVLLLLLLVEQAAA. The Extracellular portion of the chain corresponds to 19 to 23; it reads LGEPQ. A helical transmembrane segment spans residues 24–44; sequence LCYILDAILFLYGIVLTLLYC. The Cytoplasmic segment spans residues 45–86; the sequence is RLKLQVRKAAIDSYEKSDGVYTGLSTRNQETYETLKHEKPPQ. The region spanning 54-82 is the ITAM domain; it reads AIDSYEKSDGVYTGLSTRNQETYETLKHE. Y65 is modified (phosphotyrosine). At S69 the chain carries Phosphoserine. The residue at position 76 (Y76) is a Phosphotyrosine. At T78 the chain carries Phosphothreonine.

The protein belongs to the CD3Z/FCER1G family. As to quaternary structure, igE Fc receptor is a tetramer of an alpha chain, a beta chain, and two disulfide linked gamma chains. Associates with FCGR1A; forms a functional signaling complex. The signaling subunit of immunoglobulin gamma (IgG) Fc receptor complex. As a homodimer or a heterodimer of CD247 and FCER1G, associates with the ligand binding subunit FCGR3A to form a functional receptor complex. Associates with CLEC6A. Interacts with CLEC4E. Interacts (via ITAM domain) with SYK (via SH2 domains); activates SYK, enabling integrin-mediated activation of neutrophils and macrophages. Interacts with common beta chain of interleukin 3 receptor CSF2RB and recruits SYK in response to IL3 stimulation; this interaction is direct. Interacts with CD300LH; the interaction may be indirect. Interacts with CD300LD. Interacts with TARM1.

It localises to the cell membrane. Adapter protein containing an immunoreceptor tyrosine-based activation motif (ITAM) that transduces activation signals from various immunoreceptors. As a component of the high-affinity immunoglobulin E (IgE) receptor, mediates allergic inflammatory signaling in mast cells. As a constitutive component of interleukin-3 receptor complex, selectively mediates interleukin 4/IL4 production b basophils priming T-cells toward effector T-helper 2 subset. Associates with pattern recognition receptors CLEC4D and CLEC4E to form a functional signaling complex in myeloid cells. Binding of mycobacterial trehalose 6,6'-dimycolate (TDM) to this receptor complex leads to phosphorylation of ITAM, triggering activation of SYK, CARD9 and NF-kappa-B, consequently driving maturation of antigen-presenting cells and shaping antigen-specific priming of T-cells toward effector T-helper 1 and T-helper 17 cell subtypes. May function cooperatively with other activating receptors. Functionally linked to integrin beta-2/ITGB2-mediated neutrophil activation. Also involved in integrin alpha-2/ITGA2-mediated platelet activation. The sequence is that of High affinity immunoglobulin epsilon receptor subunit gamma (FCER1G) from Sus scrofa (Pig).